Consider the following 347-residue polypeptide: NADH-ubiquinone oxidoreductase chain 2 (347 aa).

The next 10 membrane-spanning stretches (helical) occupy residues 3–23 (PLAL…TMMS), 25–45 (HWLT…PILM), 59–79 (YFMT…INLM), 93–115 (VASN…HFWV), 150–170 (NTNL…WGGL), 178–198 (ILAY…PFNP), 200–220 (LTLL…MILA), 240–260 (MTIM…LSGF), 274–294 (NSII…YFYM), and 326–346 (LPTL…ISML).

Belongs to the complex I subunit 2 family. Core subunit of respiratory chain NADH dehydrogenase (Complex I) which is composed of 45 different subunits. Interacts with TMEM242.

The protein localises to the mitochondrion inner membrane. It catalyses the reaction a ubiquinone + NADH + 5 H(+)(in) = a ubiquinol + NAD(+) + 4 H(+)(out). Its function is as follows. Core subunit of the mitochondrial membrane respiratory chain NADH dehydrogenase (Complex I) which catalyzes electron transfer from NADH through the respiratory chain, using ubiquinone as an electron acceptor. Essential for the catalytic activity and assembly of complex I. This chain is NADH-ubiquinone oxidoreductase chain 2, found in Mammuthus primigenius (Siberian woolly mammoth).